The sequence spans 86 residues: Large ribosomal subunit protein bL31 (86 aa).

Positions 65–86 are disordered; sequence YGMGSANSATSKEQKEEKDSNK. Positions 76–86 are enriched in basic and acidic residues; it reads KEQKEEKDSNK.

The protein belongs to the bacterial ribosomal protein bL31 family. Type A subfamily. As to quaternary structure, part of the 50S ribosomal subunit.

Functionally, binds the 23S rRNA. The chain is Large ribosomal subunit protein bL31 from Prochlorococcus marinus (strain MIT 9312).